A 121-amino-acid polypeptide reads, in one-letter code: Small ribosomal subunit protein uS13 (121 aa).

The interval 98–121 is disordered; the sequence is RGQKTRNNAHTVKGKPKSIAGKKK. Positions 109-121 are enriched in basic residues; the sequence is VKGKPKSIAGKKK.

This sequence belongs to the universal ribosomal protein uS13 family. As to quaternary structure, part of the 30S ribosomal subunit. Forms a loose heterodimer with protein S19. Forms two bridges to the 50S subunit in the 70S ribosome.

Functionally, located at the top of the head of the 30S subunit, it contacts several helices of the 16S rRNA. In the 70S ribosome it contacts the 23S rRNA (bridge B1a) and protein L5 of the 50S subunit (bridge B1b), connecting the 2 subunits; these bridges are implicated in subunit movement. Contacts the tRNAs in the A and P-sites. This is Small ribosomal subunit protein uS13 from Phytoplasma australiense.